The chain runs to 83 residues: U5-theraphotoxin-Hs1a 6 (83 aa).

The N-terminal stretch at 1 to 21 (MKTSMFLTLTGLVLLFVVCYA) is a signal peptide. Residues 22-49 (SESEEKEFPKELLSSIFAADSDFKVEER) constitute a propeptide that is removed on maturation. 3 cysteine pairs are disulfide-bonded: C51–C63, C56–C68, and C62–C75.

This sequence belongs to the neurotoxin 10 (Hwtx-1) family. 51 (Hntx-8) subfamily. Hntx-8 sub-subfamily. As to expression, expressed by the venom gland.

It is found in the secreted. In terms of biological role, agglutinates erythrocytes. The protein is U5-theraphotoxin-Hs1a 6 of Cyriopagopus schmidti (Chinese bird spider).